A 247-amino-acid chain; its full sequence is NADH-ubiquinone oxidoreductase chain 6 (247 aa).

5 helical membrane passes run 18 to 38, 44 to 64, 70 to 90, 104 to 124, and 168 to 188; these read TMIL…VVRA, SVLF…LLGL, ISPV…VMMF, YLPV…FILD, and VWFL…IVLT.

Belongs to the complex I subunit 6 family.

Its subcellular location is the mitochondrion membrane. It catalyses the reaction a ubiquinone + NADH + 5 H(+)(in) = a ubiquinol + NAD(+) + 4 H(+)(out). In terms of biological role, core subunit of the mitochondrial membrane respiratory chain NADH dehydrogenase (Complex I) that is believed to belong to the minimal assembly required for catalysis. Complex I functions in the transfer of electrons from NADH to the respiratory chain. The immediate electron acceptor for the enzyme is believed to be ubiquinone. The sequence is that of NADH-ubiquinone oxidoreductase chain 6 (ND6) from Triticum aestivum (Wheat).